We begin with the raw amino-acid sequence, 469 residues long: 3-isopropylmalate dehydratase large subunit (469 aa).

[4Fe-4S] cluster is bound by residues cysteine 350, cysteine 410, and cysteine 413.

Belongs to the aconitase/IPM isomerase family. LeuC type 1 subfamily. Heterodimer of LeuC and LeuD. [4Fe-4S] cluster is required as a cofactor.

The catalysed reaction is (2R,3S)-3-isopropylmalate = (2S)-2-isopropylmalate. The protein operates within amino-acid biosynthesis; L-leucine biosynthesis; L-leucine from 3-methyl-2-oxobutanoate: step 2/4. In terms of biological role, catalyzes the isomerization between 2-isopropylmalate and 3-isopropylmalate, via the formation of 2-isopropylmaleate. This chain is 3-isopropylmalate dehydratase large subunit, found in Rhizobium rhizogenes (strain K84 / ATCC BAA-868) (Agrobacterium radiobacter).